A 514-amino-acid polypeptide reads, in one-letter code: Membrane-bound lytic murein transglycosylase F (514 aa).

An N-terminal signal peptide occupies residues 1–30; that stretch reads MLSNNPLITKFRELFTVALVLALLSGCQWQ. The tract at residues 31-271 is non-LT domain; sequence DDNLTDLEKI…QLEEKYFGHV (241 aa). Residues 272-514 are LT domain; that stretch reads GSFDYVDTRA…KTIEDPGPSQ (243 aa). Glutamate 316 is a catalytic residue. The disordered stretch occupies residues 482–514; the sequence is PVPPRQANVDGSLNNEAAISSAEKTIEDPGPSQ. The span at 490–499 shows a compositional bias: polar residues; the sequence is VDGSLNNEAA.

It in the N-terminal section; belongs to the bacterial solute-binding protein 3 family. The protein in the C-terminal section; belongs to the transglycosylase Slt family.

The protein resides in the cell outer membrane. The catalysed reaction is Exolytic cleavage of the (1-&gt;4)-beta-glycosidic linkage between N-acetylmuramic acid (MurNAc) and N-acetylglucosamine (GlcNAc) residues in peptidoglycan, from either the reducing or the non-reducing ends of the peptidoglycan chains, with concomitant formation of a 1,6-anhydrobond in the MurNAc residue.. Murein-degrading enzyme that degrades murein glycan strands and insoluble, high-molecular weight murein sacculi, with the concomitant formation of a 1,6-anhydromuramoyl product. Lytic transglycosylases (LTs) play an integral role in the metabolism of the peptidoglycan (PG) sacculus. Their lytic action creates space within the PG sacculus to allow for its expansion as well as for the insertion of various structures such as secretion systems and flagella. The sequence is that of Membrane-bound lytic murein transglycosylase F from Photobacterium profundum (strain SS9).